Reading from the N-terminus, the 251-residue chain is PF03932 family protein CutC (251 aa).

Belongs to the CutC family.

It localises to the cytoplasm. The polypeptide is PF03932 family protein CutC (Edwardsiella ictaluri (strain 93-146)).